The primary structure comprises 110 residues: Large ribosomal subunit protein uL22 (110 aa).

The protein belongs to the universal ribosomal protein uL22 family. In terms of assembly, part of the 50S ribosomal subunit.

Its function is as follows. This protein binds specifically to 23S rRNA; its binding is stimulated by other ribosomal proteins, e.g. L4, L17, and L20. It is important during the early stages of 50S assembly. It makes multiple contacts with different domains of the 23S rRNA in the assembled 50S subunit and ribosome. The globular domain of the protein is located near the polypeptide exit tunnel on the outside of the subunit, while an extended beta-hairpin is found that lines the wall of the exit tunnel in the center of the 70S ribosome. The protein is Large ribosomal subunit protein uL22 of Oleidesulfovibrio alaskensis (strain ATCC BAA-1058 / DSM 17464 / G20) (Desulfovibrio alaskensis).